The primary structure comprises 632 residues: tRNA uridine 5-carboxymethylaminomethyl modification enzyme MnmG (632 aa).

FAD-binding positions include 15–20 (GAGHAG), Ile127, and Ser182. Residue 276–290 (GPRYCPSIEDKIVRF) participates in NAD(+) binding. FAD is bound at residue Gln373.

Belongs to the MnmG family. As to quaternary structure, homodimer. Heterotetramer of two MnmE and two MnmG subunits. Requires FAD as cofactor.

Its subcellular location is the cytoplasm. Functionally, NAD-binding protein involved in the addition of a carboxymethylaminomethyl (cmnm) group at the wobble position (U34) of certain tRNAs, forming tRNA-cmnm(5)s(2)U34. This chain is tRNA uridine 5-carboxymethylaminomethyl modification enzyme MnmG, found in Streptococcus pyogenes serotype M4 (strain MGAS10750).